Here is a 726-residue protein sequence, read N- to C-terminus: Delta-1-pyrroline-5-carboxylate synthase B (726 aa).

Residues 1–296 are glutamate 5-kinase; that stretch reads MTEIDRSRAF…WAPVVDTTSR (296 aa). 3 residues coordinate substrate: Ser-60, Asp-157, and Asn-176. ATP-binding positions include 196 to 197 and 236 to 242; these read SD and RGGMTAK. Positions 297–717 are gamma-glutamyl phosphate reductase; the sequence is DMAVAARESS…YTHKDLPVLQ (421 aa).

The protein in the N-terminal section; belongs to the glutamate 5-kinase family. In the C-terminal section; belongs to the gamma-glutamyl phosphate reductase family.

It carries out the reaction L-glutamate + ATP = L-glutamyl 5-phosphate + ADP. The catalysed reaction is L-glutamate 5-semialdehyde + phosphate + NADP(+) = L-glutamyl 5-phosphate + NADPH + H(+). It participates in amino-acid biosynthesis; L-proline biosynthesis; L-glutamate 5-semialdehyde from L-glutamate: step 1/2. The protein operates within amino-acid biosynthesis; L-proline biosynthesis; L-glutamate 5-semialdehyde from L-glutamate: step 2/2. P5CS plays a key role in proline biosynthesis, leading to osmoregulation in plants. The protein is Delta-1-pyrroline-5-carboxylate synthase B (P5CSB) of Arabidopsis thaliana (Mouse-ear cress).